The following is a 145-amino-acid chain: Large ribosomal subunit protein bL17 (145 aa).

It belongs to the bacterial ribosomal protein bL17 family. As to quaternary structure, part of the 50S ribosomal subunit. Contacts protein L32.

In Francisella tularensis subsp. holarctica (strain FTNF002-00 / FTA), this protein is Large ribosomal subunit protein bL17.